The chain runs to 433 residues: MLGAVKMEGHEDWSSYYGEPEAYSSVGNMNAGLSMNPMNTYMSMSAMSTSANMTASSMNMSYVNTGMSPSITGMSPGTGAMPGMGNGVASMASHLSPSMSPMSAQATSMNALAPYTNINSMSPIYGQSNINRSRDPKTYRRSYTHAKPPYSYISLITMAIQQSPSKMLTLSEVYQWIMDLFPFYRQNQQRWQNSIRHSLSFNDCFLKVPRSPDKPGKGSFWTLHPDSGNMFENGCYLRRQKRFKCDKKPSLREGGGKKLSEGASSVGSVGNSSSERSVGNESPHSSSSPCQEQKRSLVDMKSSHGLSPEHATSPASQAQHLLSQHHSVLSHEAQSHLKPEHHYSFNHPFSINNLMSSEQQHHHHHHHHNHQHHHKMDLKAYEQVMHYSGYGSPMAGSLAMSTVTNKSGLEPSPISSDTSYYQGGYSRPIMNSS.

The segment at residues 147-241 is a DNA-binding region (fork-head); sequence KPPYSYISLI…ENGCYLRRQK (95 aa). Residues 247-260 show a composition bias toward basic and acidic residues; the sequence is KKPSLREGGGKKLS. Disordered stretches follow at residues 247-337 and 407-433; these read KKPS…QSHL and SGLE…MNSS. Low complexity predominate over residues 261 to 282; the sequence is EGASSVGSVGNSSSERSVGNES. The segment covering 292–302 has biased composition (basic and acidic residues); sequence EQKRSLVDMKS. Positions 315–331 are enriched in low complexity; sequence ASQAQHLLSQHHSVLSH. The span at 407–421 shows a compositional bias: polar residues; it reads SGLEPSPISSDTSYY.

It localises to the nucleus. In terms of biological role, acts as a transcriptional activator during early development, limiting the extent of mesoderm formation in the gastrula. Binds to DNA via the target sequence 5'-GT[AC]AACA-3', with 5'-GTAAACA-3' being the preferred binding site. The polypeptide is Forkhead box protein A2-B (foxa2-b) (Xenopus laevis (African clawed frog)).